We begin with the raw amino-acid sequence, 241 residues long: Carboxy-S-adenosyl-L-methionine synthase (241 aa).

Residues Tyr-38, 63-65 (GCS), 88-89 (DN), 116-117 (DI), Asn-131, and Arg-198 each bind S-adenosyl-L-methionine.

The protein belongs to the class I-like SAM-binding methyltransferase superfamily. Cx-SAM synthase family. Homodimer.

It catalyses the reaction prephenate + S-adenosyl-L-methionine = carboxy-S-adenosyl-L-methionine + 3-phenylpyruvate + H2O. Its function is as follows. Catalyzes the conversion of S-adenosyl-L-methionine (SAM) to carboxy-S-adenosyl-L-methionine (Cx-SAM). This is Carboxy-S-adenosyl-L-methionine synthase from Haemophilus influenzae (strain PittEE).